Reading from the N-terminus, the 305-residue chain is Glycine--tRNA ligase alpha subunit (305 aa).

This sequence belongs to the class-II aminoacyl-tRNA synthetase family. As to quaternary structure, tetramer of two alpha and two beta subunits.

It is found in the cytoplasm. It catalyses the reaction tRNA(Gly) + glycine + ATP = glycyl-tRNA(Gly) + AMP + diphosphate. This chain is Glycine--tRNA ligase alpha subunit, found in Streptococcus pneumoniae (strain Hungary19A-6).